A 150-amino-acid polypeptide reads, in one-letter code: UPF0178 protein Shew_2726 (150 aa).

The protein belongs to the UPF0178 family.

The chain is UPF0178 protein Shew_2726 from Shewanella loihica (strain ATCC BAA-1088 / PV-4).